The following is a 179-amino-acid chain: ATP-dependent protease subunit HslV (179 aa).

Residue Thr-7 is part of the active site. Positions 162, 165, and 168 each coordinate Na(+).

This sequence belongs to the peptidase T1B family. HslV subfamily. In terms of assembly, a double ring-shaped homohexamer of HslV is capped on each side by a ring-shaped HslU homohexamer. The assembly of the HslU/HslV complex is dependent on binding of ATP.

Its subcellular location is the cytoplasm. The enzyme catalyses ATP-dependent cleavage of peptide bonds with broad specificity.. With respect to regulation, allosterically activated by HslU binding. In terms of biological role, protease subunit of a proteasome-like degradation complex believed to be a general protein degrading machinery. The protein is ATP-dependent protease subunit HslV of Nitrosococcus oceani (strain ATCC 19707 / BCRC 17464 / JCM 30415 / NCIMB 11848 / C-107).